Consider the following 137-residue polypeptide: uncharacterized protein (137 aa).

An N-terminal signal peptide occupies residues 1–15 (MKKLAIAGALLLLAG). Cysteine 16 is lipidated: N-palmitoyl cysteine. Residue cysteine 16 is the site of S-diacylglycerol cysteine attachment.

The protein localises to the cell membrane. This is an uncharacterized protein from Escherichia coli (strain K12).